Here is a 280-residue protein sequence, read N- to C-terminus: 3-methyl-2-oxobutanoate hydroxymethyltransferase (280 aa).

Mg(2+) is bound by residues aspartate 61 and aspartate 100. 3-methyl-2-oxobutanoate is bound by residues 61-62, aspartate 100, and lysine 130; that span reads DS. Glutamate 132 contributes to the Mg(2+) binding site. Glutamate 198 acts as the Proton acceptor in catalysis.

It belongs to the PanB family. As to quaternary structure, homodecamer; pentamer of dimers. The cofactor is Mg(2+).

Its subcellular location is the cytoplasm. The enzyme catalyses 3-methyl-2-oxobutanoate + (6R)-5,10-methylene-5,6,7,8-tetrahydrofolate + H2O = 2-dehydropantoate + (6S)-5,6,7,8-tetrahydrofolate. It participates in cofactor biosynthesis; (R)-pantothenate biosynthesis; (R)-pantoate from 3-methyl-2-oxobutanoate: step 1/2. Functionally, catalyzes the reversible reaction in which hydroxymethyl group from 5,10-methylenetetrahydrofolate is transferred onto alpha-ketoisovalerate to form ketopantoate. The polypeptide is 3-methyl-2-oxobutanoate hydroxymethyltransferase (Mycolicibacterium vanbaalenii (strain DSM 7251 / JCM 13017 / BCRC 16820 / KCTC 9966 / NRRL B-24157 / PYR-1) (Mycobacterium vanbaalenii)).